We begin with the raw amino-acid sequence, 118 residues long: Histone H4 (118 aa).

Positions 1–39 are disordered; that stretch reads MATDTGSGRGKGGKGVTLGKGSKGAKASKGGKRIRTKTQ. A compositionally biased stretch (gly residues) spans 7 to 22; sequence SGRGKGGKGVTLGKGS.

The protein belongs to the histone H4 family. The nucleosome is a histone octamer containing two molecules each of H2A, H2B, H3 and H4 assembled in one H3-H4 heterotetramer and two H2A-H2B heterodimers. The octamer wraps approximately 147 bp of DNA.

It is found in the nucleus. The protein resides in the chromosome. Functionally, core component of nucleosome. Nucleosomes wrap and compact DNA into chromatin, limiting DNA accessibility to the cellular machineries which require DNA as a template. Histones thereby play a central role in transcription regulation, DNA repair, DNA replication and chromosomal stability. DNA accessibility is regulated via a complex set of post-translational modifications of histones, also called histone code, and nucleosome remodeling. In Entamoeba histolytica (strain ATCC 30459 / HM-1:IMSS / ABRM), this protein is Histone H4.